The chain runs to 620 residues: Protein regulator of cytokinesis 1 (620 aa).

Residues 1 to 303 (MRRSEVLAEE…IEAIRVELVQ (303 aa)) form a required for the interaction with KIF4A region. The segment at 1 to 341 (MRRSEVLAEE…QLHDAEIVRL (341 aa)) is dimerization. Coiled-coil stretches lie at residues 96–133 (ILQL…ELCE), 211–304 (SLEN…LVQY), and 383–463 (GNLL…TEML). Residues 342–466 (KNYYEVHKEL…QTETEMLYGS (125 aa)) are spectrin-fold. Positions 446 to 459 (AKQERQLKNKKQTE) are enriched in basic and acidic residues. Residues 446–488 (AKQERQLKNKKQTETEMLYGSAPRTPSKRRGLAPNTPGKARKL) form a disordered region. The tract at residues 467–620 (APRTPSKRRG…GILNSTNIQS (154 aa)) is unstructured, Arg/Lys rich. T470 and T481 each carry phosphothreonine; by CDK1. S513, R541, and S571 each carry phosphoserine. Residues 517–545 (RLPPSGSKPVAASTCSGKKTPRTGRHGAN) are disordered. T578 carries the post-translational modification Phosphothreonine. Positions 600-620 (LSKASKSDATSGILNSTNIQS) are disordered. Residues 606-620 (SDATSGILNSTNIQS) show a composition bias toward polar residues. The residue at position 616 (T616) is a Phosphothreonine; by PLK1.

The protein belongs to the MAP65/ASE1 family. As to quaternary structure, homodimer. Interacts with the C-terminal Rho-GAP domain and the basic region of RACGAP1. The interaction with RACGAP1 inhibits its GAP activity towards CDC42 in vitro, which may be required for maintaining normal spindle morphology. Interacts (via N-terminus) with the C-terminus of CENPE (via C-terminus); the interaction occurs during late mitosis. Interacts (via N-terminus) with KIF4A (via C-terminus); the interaction is required for the progression of mitosis. Interacts (via N-terminus) with KIF23 (via C-terminus); the interaction occurs during late mitosis. Interacts with KIF14 and KIF20A. Interacts with PLK1. Interacts with KIF20B. Interacts with CCDC66. Post-translationally, phosphorylation by CDK1 in early mitosis holds PRC1 in an inactive monomeric state, during the metaphase to anaphase transition, PRC1 is dephosphorylated, promoting interaction with KIF4A, which then translocates PRC1 along mitotic spindles to the plus ends of antiparallel interdigitating microtubules. Dephosphorylation also promotes MT-bundling activity by allowing dimerization. Phosphorylation by CDK1 prevents PLK1-binding: upon degradation of CDK1 at anaphase and dephosphorylation, it is then phosphorylated by PLK1, leading to cytokinesis. Overexpressed in bladder cancer cells.

It localises to the nucleus. Its subcellular location is the cytoplasm. It is found in the cytoskeleton. The protein localises to the spindle pole. The protein resides in the midbody. It localises to the chromosome. In terms of biological role, key regulator of cytokinesis that cross-links antiparrallel microtubules at an average distance of 35 nM. Essential for controlling the spatiotemporal formation of the midzone and successful cytokinesis. Required for KIF14 localization to the central spindle and midbody. Required to recruit PLK1 to the spindle. Stimulates PLK1 phosphorylation of RACGAP1 to allow recruitment of ECT2 to the central spindle. Acts as an oncogene for promoting bladder cancer cells proliferation, apoptosis inhibition and carcinogenic progression. This chain is Protein regulator of cytokinesis 1, found in Homo sapiens (Human).